The sequence spans 620 residues: Toxin coregulated pilus biosynthesis protein I (620 aa).

The region spanning 344-580 is the Methyl-accepting transducer domain; the sequence is TMNDLSIKQT…DVAKQMEDIR (237 aa).

It belongs to the methyl-accepting chemotaxis (MCP) protein family.

Its subcellular location is the cell inner membrane. Functionally, may function as an environmental regulator of TCP biogenesis. Negatively regulates the synthesis of the major pilin subunit of TCP (TcpA). The polypeptide is Toxin coregulated pilus biosynthesis protein I (tcpI) (Vibrio cholerae serotype O1 (strain ATCC 39541 / Classical Ogawa 395 / O395)).